Here is a 66-residue protein sequence, read N- to C-terminus: Stress-associated endoplasmic reticulum protein 1 (66 aa).

Residues 1 to 33 are disordered; the sequence is MVAKQRIRMANEKHSKNITQRGNVAKTSRNAPG. Over 1–38 the chain is Cytoplasmic; it reads MVAKQRIRMANEKHSKNITQRGNVAKTSRNAPGEKASV. Residues 17-30 show a composition bias toward polar residues; that stretch reads NITQRGNVAKTSRN. The chain crosses the membrane as a helical span at residues 39–59; that stretch reads GPWLLALFIFVVCGSAIFQII. The Extracellular portion of the chain corresponds to 60–66; the sequence is QSIRMGM.

This sequence belongs to the RAMP4 family. In terms of assembly, interacts with SEC61B, SEC61A1 and the SEC61 complex. Interacts with CANX.

It localises to the membrane. The protein localises to the endoplasmic reticulum membrane. Functionally, interacts with target proteins during their translocation into the lumen of the endoplasmic reticulum. Protects unfolded target proteins against degradation during ER stress. May facilitate glycosylation of target proteins after termination of ER stress. May modulate the use of N-glycosylation sites on target proteins. The sequence is that of Stress-associated endoplasmic reticulum protein 1 (SERP1) from Pongo abelii (Sumatran orangutan).